The primary structure comprises 101 residues: Small ribosomal subunit protein uS14 (101 aa).

Belongs to the universal ribosomal protein uS14 family. In terms of assembly, part of the 30S ribosomal subunit. Contacts proteins S3 and S10.

Its function is as follows. Binds 16S rRNA, required for the assembly of 30S particles and may also be responsible for determining the conformation of the 16S rRNA at the A site. The sequence is that of Small ribosomal subunit protein uS14 from Dechloromonas aromatica (strain RCB).